The chain runs to 610 residues: UvrABC system protein C (610 aa).

The 79-residue stretch at 16-94 (SQPGVYRMYD…IKLYQPRYNV (79 aa)) folds into the GIY-YIG domain. In terms of domain architecture, UVR spans 204 to 239 (DQVLTQLISRMETASQNLEFEEAARIRDQIQAVRRV).

This sequence belongs to the UvrC family. Interacts with UvrB in an incision complex.

The protein resides in the cytoplasm. In terms of biological role, the UvrABC repair system catalyzes the recognition and processing of DNA lesions. UvrC both incises the 5' and 3' sides of the lesion. The N-terminal half is responsible for the 3' incision and the C-terminal half is responsible for the 5' incision. This is UvrABC system protein C from Escherichia coli (strain UTI89 / UPEC).